The chain runs to 84 residues: Large ribosomal subunit protein bL27 (84 aa).

Residues 1–29 (MAHKKGGGSTKNGRDSNPKYLGIKASGGS) form a disordered region.

This sequence belongs to the bacterial ribosomal protein bL27 family.

The chain is Large ribosomal subunit protein bL27 from Chlorobium phaeobacteroides (strain BS1).